Here is a 24-residue protein sequence, read N- to C-terminus: Cryptonin (24 aa).

Its function is as follows. Antimicrobial peptide, active against the Gram-negative bacterium E.coli K12-594 (MIC=3.12 ug/ml), the Gram-positive bacteria B.subtilis KCTC 3086 (MIC=3.12 ug/ml), S.aureus KCTC 1928 (MIC=25 ug/ml) and M.luteus KCTC 3063 (MIC=1.56 ug/ml), the antibiotic resistant bacteria methicillin-resistant S.aureus (MRSA) (MIC=25 ug/ml) and vancomycin-resistant Enterococci (VRE) (MIC=25 ug/ml), and the fungi C.albicans KCTC 7965 (MIC=50 ug/ml) and C.tropicalis KCTC 1925 (MIC=3.12 ug/ml). Has very low hemolytic activity on rat erythrocytes. This is Cryptonin from Cryptotympana dubia (Korean horse cicada).